The following is an 872-amino-acid chain: Cellulose synthase catalytic subunit [UDP-forming] (872 aa).

4 helical membrane-spanning segments follow: residues 30–50 (SAFS…FIPL), 151–171 (ILGI…TQPF), 173–193 (PLAQ…VRRM), and 230–250 (LVCG…LVLG). The interval 271–364 (LWPSVDIFVP…FVSIFDCDHV (94 aa)) is catalytic subdomain A. Residue Asp313 is part of the active site. Residues Asp360 and Asp362 each coordinate substrate. A catalytic subdomain B region spans residues 441 to 501 (KPLDEIGGIA…GQRIRWARGM (61 aa)). Asp457 is an active-site residue. 5 consecutive transmembrane segments (helical) span residues 525–545 (VNAM…TAPL), 547–567 (FLLL…LFVL), 592–612 (IYET…LINP), 640–660 (IFLV…YFYG), and 668–688 (VVVS…AVAV). Residues 694–790 (QVRRSHRVEM…QHIDFVQCTF (97 aa)) enclose the PilZ domain. A helical transmembrane segment spans residues 833-853 (SVKGIFRVLTSLVSWVVSFIP).

The protein belongs to the glycosyltransferase 2 family. The cofactor is Mg(2+).

Its subcellular location is the cell inner membrane. The catalysed reaction is [(1-&gt;4)-beta-D-glucosyl](n) + UDP-alpha-D-glucose = [(1-&gt;4)-beta-D-glucosyl](n+1) + UDP + H(+). It participates in glycan metabolism; bacterial cellulose biosynthesis. Its activity is regulated as follows. Activated by bis-(3'-5') cyclic diguanylic acid (c-di-GMP). Catalytic subunit of cellulose synthase. It polymerizes uridine 5'-diphosphate glucose to cellulose, which is produced as an extracellular component for mechanical and chemical protection at the onset of the stationary phase, when the cells exhibit multicellular behavior (rdar morphotype). Coexpression of cellulose and thin aggregative fimbriae leads to a hydrophobic network with tightly packed cells embedded in a highly inert matrix. This Escherichia coli O157:H7 protein is Cellulose synthase catalytic subunit [UDP-forming] (bcsA).